Here is a 400-residue protein sequence, read N- to C-terminus: Zinc finger CCHC domain-containing protein 3 (400 aa).

The disordered stretch occupies residues 1–157; it reads MATGGGAEEE…LQDEPPAAGP (157 aa). 2 stretches are compositionally biased toward basic and acidic residues: residues 26–38 and 47–63; these read ARVE…REKM and LAEK…RDET. Positions 66 to 75 are enriched in gly residues; it reads GASGGLGSPG. Over residues 91 to 109 the composition is skewed to basic and acidic residues; that stretch reads GDPKGRRRDPTGEASDAYR. Tyr198 is subject to Phosphotyrosine. 2 CCHC-type zinc fingers span residues 349–365 and 369–384; these read RCFR…YCRK and CNLC…QCPK.

Interacts with CGAS. Interacts with RIGI. Interacts with IFIH1/MDA5.

It is found in the cytoplasm. Functionally, nucleic acid-binding protein involved in innate immune response to DNA and RNA viruses. Binds DNA and RNA in the cytoplasm and acts by promoting recognition of viral nucleic acids by virus sensors, such as RIGI, IFIH1/MDA5 and CGAS. Acts as a co-sensor for recognition of double-stranded DNA (dsDNA) by cGAS in the cytoplasm, thereby playing a role in innate immune response to cytosolic dsDNA and DNA virus. Binds dsDNA and probably acts by promoting sensing of dsDNA by CGAS, leading to enhance CGAS oligomerization and activation. Promotes sensing of viral RNA by RIG-I-like receptors proteins RIGI and IFIH1/MDA5 via two mechanisms: binds double-stranded RNA (dsRNA), enhancing the binding of RIGI and IFIH1/MDA5 to dsRNA and promotes 'Lys-63'-linked ubiquitination and subsequent activation of RIGI and IFIH1/MDA5. The protein is Zinc finger CCHC domain-containing protein 3 of Mus musculus (Mouse).